We begin with the raw amino-acid sequence, 355 residues long: MSTPSAPHGDLTDMKAILAKVAAGNALNEAEASLAFDIIMSGNATPSQMGGFLMALRVRGETVDEITGAARVMRAKAIPVEAPDGTIDTCGTGGDGSGTYNISTAAAVVIAACGVPVAKHGNRAMSSKSGAADVLGALGVNLDCDLGLVRKALWDARIGFLMAPRHHLAMRNVGPTRVGTRTIFNLLGPLSNPASAKRQLLGVYAKQWVEPLAHVLKRLGSEAAWIVHGSDGLDEITTTGPTTVAQLKDGEVTVFEIEPEQAGIFRARPELLKGGDAHVNAEAIRALFDGAQGAYRDIVLLNAAAALHVAGKAGDLKEGDERARHAIDSGAARAVLQHLVSITNSSITNEPVAAP.

Residues glycine 91, glycine 94 to aspartate 95, threonine 99, asparagine 101 to threonine 104, lysine 119 to serine 127, and alanine 131 each bind 5-phospho-alpha-D-ribose 1-diphosphate. Position 91 (glycine 91) interacts with anthranilate. Residue serine 103 participates in Mg(2+) binding. Asparagine 122 contacts anthranilate. Arginine 177 contacts anthranilate. Mg(2+) contacts are provided by aspartate 234 and glutamate 235.

Belongs to the anthranilate phosphoribosyltransferase family. As to quaternary structure, homodimer. It depends on Mg(2+) as a cofactor.

It catalyses the reaction N-(5-phospho-beta-D-ribosyl)anthranilate + diphosphate = 5-phospho-alpha-D-ribose 1-diphosphate + anthranilate. It participates in amino-acid biosynthesis; L-tryptophan biosynthesis; L-tryptophan from chorismate: step 2/5. In terms of biological role, participates in the tryptophan-dependent indole-3-acetic acid production, which is a phytohormone released by A.brasilense. Catalyzes the transfer of the phosphoribosyl group of 5-phosphorylribose-1-pyrophosphate (PRPP) to anthranilate to yield N-(5'-phosphoribosyl)-anthranilate (PRA). The polypeptide is Anthranilate phosphoribosyltransferase (Azospirillum brasilense).